The primary structure comprises 180 residues: Pro-glucagon (180 aa).

A signal peptide spans 1-20; that stretch reads MKTIYFVAGLLIMLVQGSWQ. Residues 25-58 are disordered; sequence DTEENPRSFPASQTEAHEDPDEMNEDKRHSQGTF. Position 54 is a phosphoserine (Ser54). Positions 84–89 are excised as a propeptide; the sequence is NRNNIA. Phosphoserine is present on residues Ser105 and Ser108. Arg127 bears the Arginine amide mark. The propeptide occupies 131–145; sequence DFPEEVAIAEELGRR. 2 positions are modified to phosphoserine: Ser150 and Ser152.

The protein belongs to the glucagon family. Proglucagon is post-translationally processed in a tissue-specific manner in pancreatic A cells and intestinal L cells. In pancreatic A cells, the major bioactive hormone is glucagon cleaved by PCSK2/PC2. In the intestinal L cells PCSK1/PC1 liberates GLP-1, GLP-2, glicentin and oxyntomodulin. GLP-1 is further N-terminally truncated by post-translational processing in the intestinal L cells resulting in GLP-1(7-37) GLP-1-(7-36)amide. The C-terminal amidation is neither important for the metabolism of GLP-1 nor for its effects on the endocrine pancreas. As to expression, secreted in the A cells of the islets of Langerhans. Secreted in the A cells of the islets of Langerhans. Secreted from enteroendocrine L cells throughout the gastrointestinal tract. Also secreted in selected neurons in the brain. In terms of tissue distribution, secreted from enteroendocrine cells throughout the gastrointestinal tract. Also secreted in selected neurons in the brain. As to expression, secreted from enteroendocrine cells throughout the gastrointestinal tract.

The protein localises to the secreted. Its function is as follows. Plays a key role in glucose metabolism and homeostasis. Regulates blood glucose by increasing gluconeogenesis and decreasing glycolysis. A counterregulatory hormone of insulin, raises plasma glucose levels in response to insulin-induced hypoglycemia. Plays an important role in initiating and maintaining hyperglycemic conditions in diabetes. Functionally, potent stimulator of glucose-dependent insulin release. Also stimulates insulin release in response to IL6. Plays important roles on gastric motility and the suppression of plasma glucagon levels. May be involved in the suppression of satiety and stimulation of glucose disposal in peripheral tissues, independent of the actions of insulin. Has growth-promoting activities on intestinal epithelium. May also regulate the hypothalamic pituitary axis (HPA) via effects on LH, TSH, CRH, oxytocin, and vasopressin secretion. Increases islet mass through stimulation of islet neogenesis and pancreatic beta cell proliferation. Inhibits beta cell apoptosis. Stimulates intestinal growth and up-regulates villus height in the small intestine, concomitant with increased crypt cell proliferation and decreased enterocyte apoptosis. The gastrointestinal tract, from the stomach to the colon is the principal target for GLP-2 action. Plays a key role in nutrient homeostasis, enhancing nutrient assimilation through enhanced gastrointestinal function, as well as increasing nutrient disposal. Stimulates intestinal glucose transport and decreases mucosal permeability. In terms of biological role, significantly reduces food intake. Inhibits gastric emptying in humans. Suppression of gastric emptying may lead to increased gastric distension, which may contribute to satiety by causing a sensation of fullness. Its function is as follows. May modulate gastric acid secretion and the gastro-pyloro-duodenal activity. May play an important role in intestinal mucosal growth in the early period of life. In Mus musculus (Mouse), this protein is Pro-glucagon (Gcg).